Here is a 384-residue protein sequence, read N- to C-terminus: S-adenosylmethionine synthase (384 aa).

His16 lines the ATP pocket. Asp18 contacts Mg(2+). Glu44 contributes to the K(+) binding site. Residues Glu57 and Gln100 each coordinate L-methionine. The interval 100–110 is flexible loop; that stretch reads QSADIAMGVDE. Residues 165-167, Asp240, 246-247, Ala263, and Lys267 each bind ATP; these read DAK and RK. Asp240 lines the L-methionine pocket. Lys271 is a binding site for L-methionine.

Belongs to the AdoMet synthase family. Homotetramer; dimer of dimers. It depends on Mg(2+) as a cofactor. K(+) serves as cofactor.

Its subcellular location is the cytoplasm. It carries out the reaction L-methionine + ATP + H2O = S-adenosyl-L-methionine + phosphate + diphosphate. The protein operates within amino-acid biosynthesis; S-adenosyl-L-methionine biosynthesis; S-adenosyl-L-methionine from L-methionine: step 1/1. Catalyzes the formation of S-adenosylmethionine (AdoMet) from methionine and ATP. The overall synthetic reaction is composed of two sequential steps, AdoMet formation and the subsequent tripolyphosphate hydrolysis which occurs prior to release of AdoMet from the enzyme. In Teredinibacter turnerae (strain ATCC 39867 / T7901), this protein is S-adenosylmethionine synthase.